A 422-amino-acid polypeptide reads, in one-letter code: Phosphoribosylamine--glycine ligase (422 aa).

One can recognise an ATP-grasp domain in the interval 107–312 (KDVMAAAGVR…LGQLLHAAAT (206 aa)). Position 137-193 (137-193 (GPPAGDPAWVVKDDRLAAGKGVVVTADRDVARAHGAALLEAGHPVLLESYLDGPEVS)) interacts with ATP. Positions 282 and 284 each coordinate Mg(2+).

The protein belongs to the GARS family. Requires Mg(2+) as cofactor. It depends on Mn(2+) as a cofactor.

It catalyses the reaction 5-phospho-beta-D-ribosylamine + glycine + ATP = N(1)-(5-phospho-beta-D-ribosyl)glycinamide + ADP + phosphate + H(+). The protein operates within purine metabolism; IMP biosynthesis via de novo pathway; N(1)-(5-phospho-D-ribosyl)glycinamide from 5-phospho-alpha-D-ribose 1-diphosphate: step 2/2. This Mycobacterium bovis (strain ATCC BAA-935 / AF2122/97) protein is Phosphoribosylamine--glycine ligase.